The following is a 292-amino-acid chain: uncharacterized protein (292 aa).

Residues 1-21 (MNSNSNKKRDPARFPAGVAQG) form the signal peptide. Positions 1 to 30 (MNSNSNKKRDPARFPAGVAQGCSTTRAGDL) are disordered.

This is an uncharacterized protein from Treponema pallidum (strain Nichols).